The sequence spans 343 residues: Uroporphyrinogen decarboxylase (343 aa).

Substrate contacts are provided by residues 23–27 (RQAGR), Asp73, Tyr149, Thr204, and His320.

The protein belongs to the uroporphyrinogen decarboxylase family. As to quaternary structure, homodimer.

It is found in the cytoplasm. The enzyme catalyses uroporphyrinogen III + 4 H(+) = coproporphyrinogen III + 4 CO2. It participates in porphyrin-containing compound metabolism; protoporphyrin-IX biosynthesis; coproporphyrinogen-III from 5-aminolevulinate: step 4/4. Catalyzes the decarboxylation of four acetate groups of uroporphyrinogen-III to yield coproporphyrinogen-III. The protein is Uroporphyrinogen decarboxylase of Bradyrhizobium sp. (strain BTAi1 / ATCC BAA-1182).